Consider the following 148-residue polypeptide: UPF0260 protein PC1_1943 (148 aa).

It belongs to the UPF0260 family.

The polypeptide is UPF0260 protein PC1_1943 (Pectobacterium carotovorum subsp. carotovorum (strain PC1)).